A 172-amino-acid chain; its full sequence is Adenine phosphoribosyltransferase (172 aa).

It belongs to the purine/pyrimidine phosphoribosyltransferase family. As to quaternary structure, homodimer.

The protein localises to the cytoplasm. The catalysed reaction is AMP + diphosphate = 5-phospho-alpha-D-ribose 1-diphosphate + adenine. It functions in the pathway purine metabolism; AMP biosynthesis via salvage pathway; AMP from adenine: step 1/1. Functionally, catalyzes a salvage reaction resulting in the formation of AMP, that is energically less costly than de novo synthesis. This chain is Adenine phosphoribosyltransferase, found in Prochlorococcus marinus (strain MIT 9313).